We begin with the raw amino-acid sequence, 220 residues long: Iron-sulfur cluster repair protein YtfE (220 aa).

Belongs to the RIC family. YtfE subfamily. In terms of assembly, homodimer.

The protein localises to the cytoplasm. In terms of biological role, di-iron-containing protein involved in the repair of iron-sulfur clusters damaged by oxidative and nitrosative stress conditions. The sequence is that of Iron-sulfur cluster repair protein YtfE from Escherichia coli O81 (strain ED1a).